The following is a 138-amino-acid chain: ATP synthase epsilon chain 1 (138 aa).

It belongs to the ATPase epsilon chain family. F-type ATPases have 2 components, CF(1) - the catalytic core - and CF(0) - the membrane proton channel. CF(1) has five subunits: alpha(3), beta(3), gamma(1), delta(1), epsilon(1). CF(0) has three main subunits: a, b and c.

The protein resides in the cell inner membrane. Produces ATP from ADP in the presence of a proton gradient across the membrane. The protein is ATP synthase epsilon chain 1 of Syntrophotalea carbinolica (strain DSM 2380 / NBRC 103641 / GraBd1) (Pelobacter carbinolicus).